The primary structure comprises 87 residues: Small ribosomal subunit protein bS20 (87 aa).

The interval 1-26 (MANTKSALKRIRQTATRTARNRAVTS) is disordered. A compositionally biased stretch (low complexity) spans 13–23 (QTATRTARNRA).

This sequence belongs to the bacterial ribosomal protein bS20 family.

Functionally, binds directly to 16S ribosomal RNA. This chain is Small ribosomal subunit protein bS20, found in Akkermansia muciniphila (strain ATCC BAA-835 / DSM 22959 / JCM 33894 / BCRC 81048 / CCUG 64013 / CIP 107961 / Muc).